Reading from the N-terminus, the 388-residue chain is MDKTFFSSNEGKPITCKAAICRKAGEALVIEDIHVDPPQAYEVRIKILCTSLCHTDLTFWKLSFGPISRFPRILGHEAVGVVESIGENVDGFKQGDVVLPVFHPYCEECKDCKSSKTNWCDRYAEDFISNTRRYGMASRFKDSSGEVIHHFLFVSSFSEYTVVDIAHLVKISPEIPVDKAALLSCGVSTGIGAAWKVANVEEGSTIAIFGLGAVGLAVAEGARLRGAAKIIGIDTNSDKFELGKKFGFTDFINPTLCGEKKISEVIKEMTEGGVDYSFECVGLASLLNEAFISTRTGTGKTVMLGMEKHAAPISLGSFDLLRGRVICGSLFGGLKSKLDIPILVDHYLKKELNLDSFITHELNFKEINKAFALLEEGKSLRCILWMDK.

The Zn(2+) site is built by Cys53, Thr55, His76, Cys106, Cys109, Cys112, Cys120, and Cys185. The an alcohol site is built by Thr55 and His76. Thr55 lines the NAD(+) pocket. Residues Gly210–Gly215, Asp234, Lys239, Leu304–Met306, Phe331, and Arg381 contribute to the NAD(+) site.

It belongs to the zinc-containing alcohol dehydrogenase family. Class-III subfamily. As to quaternary structure, homodimer. Zn(2+) is required as a cofactor.

The protein localises to the cytoplasm. The enzyme catalyses a primary alcohol + NAD(+) = an aldehyde + NADH + H(+). It carries out the reaction a secondary alcohol + NAD(+) = a ketone + NADH + H(+). The chain is Alcohol dehydrogenase-like 1 from Arabidopsis thaliana (Mouse-ear cress).